The primary structure comprises 1919 residues: Disks large homolog 5 (1919 aa).

Residues 98–142 form a disordered region; the sequence is AEGAGSTYSVLSTMPSDSESSSSLSSVGTTGKAPSPPPLLTDQQV. Residues 109–123 are compositionally biased toward low complexity; that stretch reads STMPSDSESSSSLSS. S264 and S295 each carry phosphoserine. A coiled-coil region spans residues 383–599; the sequence is LNKATAQNKD…LEKEARFRQL (217 aa). 2 PDZ domains span residues 620-710 and 705-796; these read VVEF…RRRK and VVRR…LKVF. S900 carries the post-translational modification Phosphoserine. 5 disordered regions span residues 927-1122, 1150-1187, 1201-1230, 1245-1264, and 1271-1306; these read GVGE…FRPK, QEWA…PSTT, SHRV…HQGR, EMRA…LGSS, and AERI…PQSP. T984 is subject to Phosphothreonine. At S1000 the chain carries Phosphoserine. At T1011 the chain carries Phosphothreonine. Residues 1017–1030 are compositionally biased toward basic and acidic residues; it reads RRSDSIKFQHRLET. S1021 is modified (phosphoserine). The segment covering 1045–1055 has biased composition (pro residues); that stretch reads TSPPSALPPDV. T1183 carries the post-translational modification Phosphothreonine. Residues S1209 and S1263 each carry the phosphoserine modification. Composition is skewed to low complexity over residues 1252 to 1264 and 1284 to 1298; these read SNSL…LGSS and RSVV…SHSE. The residue at position 1334 (S1334) is a Phosphoserine. The region spanning 1350–1429 is the PDZ 3 domain; sequence HVKVQKGSEP…TITILAQYNP (80 aa). The tract at residues 1434–1493 is disordered; that stretch reads LSSHSRSSSHLDPAGTHSTLQGSGTTTPEHPSVIDPLMEQDEGPSTPPAKQSSSRIAGDA. Over residues 1449-1462 the composition is skewed to polar residues; sequence THSTLQGSGTTTPE. In terms of domain architecture, PDZ 4 spans 1501–1582; sequence RVVFIKKSQL…GVRLKVQYRP (82 aa). One can recognise an SH3 domain in the interval 1593–1661; it reads GDSFYIRALY…PSKYVMDQEF (69 aa). S1666 is modified (phosphoserine). The 184-residue stretch at 1722–1905 folds into the Guanylate kinase-like domain; sequence DSVSLAYQRV…ICTQILAMVN (184 aa).

The protein belongs to the MAGUK family. In terms of assembly, interacts with MPP1. Interacts with CTNNB1 and with the third SH3 domain of SORBS3 to form a ternary complex. Interacts (via coiled-coil domain) with MARK3. Interacts (via PDZ domain 3) with STK3/MST2 and STK4/MST1. Interacts with SCRIB. Interacts with CTNB1, SMO and (via PDZ4 or guanylate kinase-like domain) with KIF7. Highly expressed in normal breast tissues and low-grade breast cancer tissues (at protein level). Highly expressed in the placenta and prostate. Expressed at a lower level in the thyroid, spinal cord, trachea, adrenal gland, skeletal muscle, pancreas, heart, brain, liver and kidney. A short splice product shows more limited expression, being absent from at least the brain.

Its subcellular location is the cell junction. The protein localises to the cell membrane. It is found in the postsynaptic density. The protein resides in the cytoplasm. It localises to the cytoskeleton. Its subcellular location is the cilium basal body. Its function is as follows. Acts as a regulator of the Hippo signaling pathway. Negatively regulates the Hippo signaling pathway by mediating the interaction of MARK3 with STK3/4, bringing them together to promote MARK3-dependent hyperphosphorylation and inactivation of STK3 kinase activity toward LATS1. Positively regulates the Hippo signaling pathway by mediating the interaction of SCRIB with STK4/MST1 and LATS1 which is important for the activation of the Hippo signaling pathway. Involved in regulating cell proliferation, maintenance of epithelial polarity, epithelial-mesenchymal transition (EMT), cell migration and invasion. Plays an important role in dendritic spine formation and synaptogenesis in cortical neurons; regulates synaptogenesis by enhancing the cell surface localization of N-cadherin. Acts as a positive regulator of hedgehog (Hh) signaling pathway. Plays a critical role in the early point of the SMO activity cycle by interacting with SMO at the ciliary base to induce the accumulation of KIF7 and GLI2 at the ciliary tip for GLI2 activation. The sequence is that of Disks large homolog 5 (DLG5) from Homo sapiens (Human).